A 76-amino-acid chain; its full sequence is Sec-independent protein translocase protein TatA (76 aa).

A helical membrane pass occupies residues 1-21 (MGGLSIWHWLIVLLIVALVFG). A disordered region spans residues 40 to 76 (KDGMKEGETPADAQQLPRTGTVDVNAKETTRSDSNKA). Over residues 64 to 76 (NAKETTRSDSNKA) the composition is skewed to basic and acidic residues.

It belongs to the TatA/E family. In terms of assembly, the Tat system comprises two distinct complexes: a TatABC complex, containing multiple copies of TatA, TatB and TatC subunits, and a separate TatA complex, containing only TatA subunits. Substrates initially bind to the TatABC complex, which probably triggers association of the separate TatA complex to form the active translocon.

The protein localises to the cell inner membrane. Functionally, part of the twin-arginine translocation (Tat) system that transports large folded proteins containing a characteristic twin-arginine motif in their signal peptide across membranes. TatA could form the protein-conducting channel of the Tat system. This Burkholderia ambifaria (strain MC40-6) protein is Sec-independent protein translocase protein TatA.